A 107-amino-acid polypeptide reads, in one-letter code: U1-lycotoxin-Ls1i (107 aa).

The N-terminal stretch at 1–20 is a signal peptide; the sequence is MMKVLVVVALLVTLISYSSS. A propeptide spanning residues 21–41 is cleaved from the precursor; that stretch reads EGIDDLEADELLSLMANEQTR. 4 disulfides stabilise this stretch: C44–C59, C51–C68, C58–C86, and C70–C84.

The protein belongs to the neurotoxin 19 (CSTX) family. 04 (U1-Lctx) subfamily. Expressed by the venom gland.

The protein localises to the secreted. This Lycosa singoriensis (Wolf spider) protein is U1-lycotoxin-Ls1i.